The sequence spans 203 residues: Putative zinc finger protein 876 (203 aa).

C2H2-type zinc fingers lie at residues 63–85 (YTCE…KNIH), 91–113 (YKCE…KRIH), 119–141 (YKCE…KKIH), and 147–169 (YKCK…TNIH). A C2H2-type 5; degenerate zinc finger spans residues 175–197 (YTCEECGKDFTWSSTLTVHQRIQ).

The protein belongs to the krueppel C2H2-type zinc-finger protein family.

The protein localises to the nucleus. May be involved in transcriptional regulation. This Homo sapiens (Human) protein is Putative zinc finger protein 876 (ZNF876P).